Here is a 509-residue protein sequence, read N- to C-terminus: Solute carrier family 2, facilitated glucose transporter member 4 (509 aa).

Residues methionine 1–leucine 24 lie on the Cytoplasmic side of the membrane. Positions glutamine 7–glycine 13 are interaction with SRFBP1. Position 10 is a phosphoserine (serine 10). The helical transmembrane segment at valine 25–isoleucine 45 threads the bilayer. The Extracellular segment spans residues asparagine 46–tryptophan 81. The N-linked (GlcNAc...) asparagine glycan is linked to asparagine 57. Residues alanine 82 to isoleucine 102 form a helical membrane-spanning segment. The Cytoplasmic portion of the chain corresponds to serine 103–alanine 111. Residues methionine 112–alanine 132 form a helical membrane-spanning segment. Residues alanine 133–arginine 142 are Extracellular-facing. A helical membrane pass occupies residues phenylalanine 143 to isoleucine 163. The Cytoplasmic segment spans residues alanine 164–alanine 171. A helical membrane pass occupies residues leucine 172–leucine 192. D-glucose is bound at residue glutamine 177. At glutamate 193–threonine 200 the chain is on the extracellular side. A helical transmembrane segment spans residues leucine 201–proline 221. The Cytoplasmic portion of the chain corresponds to leucine 222–proline 287. Residue cysteine 223 is the site of S-palmitoyl cysteine attachment. Position 274 is a phosphoserine; by SGK1 (serine 274). The helical transmembrane segment at leucine 288–tyrosine 308 threads the bilayer. D-glucose contacts are provided by residues glutamine 298 to glutamine 299 and asparagine 304. Over tyrosine 309–alanine 323 the chain is Extracellular. A helical membrane pass occupies residues tyrosine 324 to valine 344. Position 333 (asparagine 333) interacts with D-glucose. Residues glutamate 345–histidine 353 lie on the Cytoplasmic side of the membrane. A helical transmembrane segment spans residues leucine 354 to leucine 374. At glutamate 375–serine 384 the chain is on the extracellular side. A helical membrane pass occupies residues isoleucine 385 to phenylalanine 405. The D-glucose site is built by glutamate 396 and tryptophan 404. At isoleucine 406–proline 417 the chain is on the cytoplasmic side. The helical transmembrane segment at alanine 418–phenylalanine 438 threads the bilayer. The Extracellular segment spans residues glutamine 439–methionine 445. A helical membrane pass occupies residues glycine 446–leucine 466. The Cytoplasmic segment spans residues lysine 467–aspartate 509. Threonine 486 bears the Phosphothreonine mark. A Phosphoserine modification is found at serine 488. The Dileucine internalization motif motif lies at leucine 489–leucine 490.

It belongs to the major facilitator superfamily. Sugar transporter (TC 2.A.1.1) family. Glucose transporter subfamily. In terms of assembly, binds to DAXX. Interacts via its N-terminus with SRFBP1. Interacts with NDUFA9. Interacts with TRARG1; the interaction is required for proper SLC2A4 recycling after insulin stimulation. Sumoylated. Post-translationally, palmitoylated. Palmitoylation by ZDHHC7 controls the insulin-dependent translocation of GLUT4 to the plasma membrane.

The protein resides in the cell membrane. It localises to the endomembrane system. Its subcellular location is the cytoplasm. The protein localises to the perinuclear region. The catalysed reaction is D-glucose(out) = D-glucose(in). In terms of biological role, insulin-regulated facilitative glucose transporter, which plays a key role in removal of glucose from circulation. Response to insulin is regulated by its intracellular localization: in the absence of insulin, it is efficiently retained intracellularly within storage compartments in muscle and fat cells. Upon insulin stimulation, translocates from these compartments to the cell surface where it transports glucose from the extracellular milieu into the cell. This Bos taurus (Bovine) protein is Solute carrier family 2, facilitated glucose transporter member 4.